The sequence spans 418 residues: tRNA-2-methylthio-N(6)-dimethylallyladenosine synthase (418 aa).

Residues 2–118 (PGYYLWTIGC…WREIPEGFIL (117 aa)) enclose the MTTase N-terminal domain. The [4Fe-4S] cluster site is built by Cys-11, Cys-47, Cys-81, Cys-134, Cys-138, and Cys-141. The region spanning 120–351 (LRPPVSANVT…EDLQKETVGK (232 aa)) is the Radical SAM core domain. In terms of domain architecture, TRAM spans 346-414 (KETVGKANAA…PWSLQAKLVN (69 aa)).

Belongs to the methylthiotransferase family. MiaB subfamily. Monomer. [4Fe-4S] cluster serves as cofactor.

It is found in the cytoplasm. The enzyme catalyses N(6)-dimethylallyladenosine(37) in tRNA + (sulfur carrier)-SH + AH2 + 2 S-adenosyl-L-methionine = 2-methylsulfanyl-N(6)-dimethylallyladenosine(37) in tRNA + (sulfur carrier)-H + 5'-deoxyadenosine + L-methionine + A + S-adenosyl-L-homocysteine + 2 H(+). Its function is as follows. Catalyzes the methylthiolation of N6-(dimethylallyl)adenosine (i(6)A), leading to the formation of 2-methylthio-N6-(dimethylallyl)adenosine (ms(2)i(6)A) at position 37 in tRNAs that read codons beginning with uridine. The polypeptide is tRNA-2-methylthio-N(6)-dimethylallyladenosine synthase (Dehalococcoides mccartyi (strain CBDB1)).